Consider the following 754-residue polypeptide: ToMV resistance protein Tm-1(GCR237) (754 aa).

Residues 1-201 form an N-terminal inhibitory domain NN region; sequence MATAQSNSPR…AGMVIGRLES (201 aa). ATP-binding positions include 18–20, Thr55, Arg92, and 124–127; these read DTK and GSGG. An N-terminal inhibitory domain NC region spans residues 211–431; that stretch reads KFTVGVTMFG…VDSFLEISPK (221 aa).

It belongs to the UPF0261 family. As to quaternary structure, homodimer. (Microbial infection) Binds, via an ATP bridge, to the tobamoviruses avirulent (Avr) replication proteins (large and small subunits, e.g. tomato mosaic virus (ToMV/TMV) AC P03587, tobacco mild green mosaic virus (TMGMV) AC P18339 and pepper mild mottle virus (PMMoV) AC P89657) to inhibit their function after the translation of tobamoviruses RNA, but before the viral replication complex formation on the membrane surfaces; this interaction is not possible with resistance-breaking strains replication proteins.

Functionally, inhibitor of viral RNA replication which confers resistance to some tobamoviruses including tomato mosaic virus (ToMV) (e.g. isolate L), tobacco mosaic virus (TMV), tobacco mild green mosaic virus (TMGMV) and pepper mild mottle virus (PMMoV), but not to resistance-breaking isolates of ToMV (e.g. LT1, SL-1 and ToMV1-2) and tomato brown rugose fruit virus (ToBRFV). Prevents tobamoviruses RNA replication by affecting the association of tobamoviruses replication proteins (large and small subunits) with host membrane-associated proteins (e.g. TOM1, TOM2A and ARL8), thus inhibiting the replication complex formation on the membranes and avoiding viral negative-strand RNA synthesis. Inhibits triphosphatase activity of ToMV replication proteins. In Solanum lycopersicum (Tomato), this protein is ToMV resistance protein Tm-1(GCR237).